Here is a 368-residue protein sequence, read N- to C-terminus: Seven-bladed beta-propeller protein MSMEG_5308 (368 aa).

In terms of assembly, interacts with MmpL3 and TtfA.

It localises to the cell septum. The protein localises to the cell tip. Functionally, stabilizes the MmpL3/TtfA trehalose monomycolate (TMM) transport complex under stress conditions. The sequence is that of Seven-bladed beta-propeller protein MSMEG_5308 from Mycolicibacterium smegmatis (strain ATCC 700084 / mc(2)155) (Mycobacterium smegmatis).